We begin with the raw amino-acid sequence, 309 residues long: Porphobilinogen deaminase (309 aa).

Residue Cys244 is modified to S-(dipyrrolylmethanemethyl)cysteine.

The protein belongs to the HMBS family. As to quaternary structure, monomer. Requires dipyrromethane as cofactor.

It catalyses the reaction 4 porphobilinogen + H2O = hydroxymethylbilane + 4 NH4(+). The protein operates within porphyrin-containing compound metabolism; protoporphyrin-IX biosynthesis; coproporphyrinogen-III from 5-aminolevulinate: step 2/4. Functionally, tetrapolymerization of the monopyrrole PBG into the hydroxymethylbilane pre-uroporphyrinogen in several discrete steps. This is Porphobilinogen deaminase from Listeria monocytogenes serotype 4a (strain HCC23).